Consider the following 247-residue polypeptide: Pleckstrin homology domain-containing family F member 2 (247 aa).

The region spanning 35–131 (VLIGEGVLTK…WMSHINKCVS (97 aa)) is the PH domain. Residues 152-212 (DSEATVCMRC…VCEFCYKQLS (61 aa)) form an FYVE-type zinc finger. Positions 158, 161, 175, 178, 183, 186, 204, and 207 each coordinate Zn(2+). Residues 213 to 247 (TGATLPPRSDSYSRQGSDFGSNNISDDDDDDDSSD) form a disordered region. Over residues 222 to 236 (DSYSRQGSDFGSNNI) the composition is skewed to polar residues. Residues 237-247 (SDDDDDDDSSD) are compositionally biased toward acidic residues.

Its subcellular location is the early endosome membrane. It is found in the endoplasmic reticulum. In terms of biological role, may play a role in early endosome fusion upstream of RAB5, hence regulating receptor trafficking and fluid-phase transport. Enhances cellular sensitivity to TNF-induced apoptosis. This Danio rerio (Zebrafish) protein is Pleckstrin homology domain-containing family F member 2 (plekhf2).